A 432-amino-acid chain; its full sequence is Mannose-6-phosphate isomerase 1 (432 aa).

At methionine 1 the chain carries N-acetylmethionine. Residues glutamine 124, histidine 126, glutamate 151, and histidine 288 each coordinate Zn(2+). Residue arginine 307 is part of the active site.

The protein belongs to the mannose-6-phosphate isomerase type 1 family. The cofactor is Zn(2+). Constitutively expressed in both vegetative and reproductive organs under normal growth conditions (at protein level).

The enzyme catalyses D-mannose 6-phosphate = D-fructose 6-phosphate. It functions in the pathway nucleotide-sugar biosynthesis; GDP-alpha-D-mannose biosynthesis; alpha-D-mannose 1-phosphate from D-fructose 6-phosphate: step 1/2. Inhibited by EDTA, Zn(2+), Cd(2+), Co(2+), p-chloromercuribenzoate and L-ascorbic acid (AsA). Its function is as follows. Phosphomannose isomerase involved in the synthesis of the GDP-mannose and dolichol-phosphate-mannose required for a number of critical mannosyl transfer reactions. Involved in the ascorbic acid (AsA) biosynthesis. Required during the endosperm development. This chain is Mannose-6-phosphate isomerase 1 (PMI1), found in Arabidopsis thaliana (Mouse-ear cress).